Here is a 38-residue protein sequence, read N- to C-terminus: Large ribosomal subunit protein bL36 (38 aa).

The protein belongs to the bacterial ribosomal protein bL36 family.

The polypeptide is Large ribosomal subunit protein bL36 (Psychrobacter arcticus (strain DSM 17307 / VKM B-2377 / 273-4)).